Here is a 499-residue protein sequence, read N- to C-terminus: Bifunctional purine biosynthesis protein PurH (499 aa).

One can recognise an MGS-like domain in the interval 1 to 144 (MINRALISVY…KNFKDVIVVT (144 aa)).

Belongs to the PurH family.

The enzyme catalyses (6R)-10-formyltetrahydrofolate + 5-amino-1-(5-phospho-beta-D-ribosyl)imidazole-4-carboxamide = 5-formamido-1-(5-phospho-D-ribosyl)imidazole-4-carboxamide + (6S)-5,6,7,8-tetrahydrofolate. The catalysed reaction is IMP + H2O = 5-formamido-1-(5-phospho-D-ribosyl)imidazole-4-carboxamide. It participates in purine metabolism; IMP biosynthesis via de novo pathway; 5-formamido-1-(5-phospho-D-ribosyl)imidazole-4-carboxamide from 5-amino-1-(5-phospho-D-ribosyl)imidazole-4-carboxamide (10-formyl THF route): step 1/1. The protein operates within purine metabolism; IMP biosynthesis via de novo pathway; IMP from 5-formamido-1-(5-phospho-D-ribosyl)imidazole-4-carboxamide: step 1/1. The polypeptide is Bifunctional purine biosynthesis protein PurH (Clostridium kluyveri (strain NBRC 12016)).